Consider the following 123-residue polypeptide: MIQVQTILNVADNSGARLVMCIKVLGGSRRRYANIGDIIKVAIKEAIPRGKVKKGEVVKAVVVRTKKGIRRTDGSMICFDNNSCVIVHDTTNQPIGTRIFGPVTRELRVEKFMKIISLAPEVL.

The protein belongs to the universal ribosomal protein uL14 family. Part of the 50S ribosomal subunit. Forms a cluster with proteins L3 and L19. In the 70S ribosome, L14 and L19 interact and together make contacts with the 16S rRNA in bridges B5 and B8.

Functionally, binds to 23S rRNA. Forms part of two intersubunit bridges in the 70S ribosome. The chain is Large ribosomal subunit protein uL14 from Buchnera aphidicola subsp. Cinara cedri (strain Cc).